The following is a 128-amino-acid chain: Large ribosomal subunit protein bL21 (128 aa).

The segment at 104–128 (GKKPSVGPRPKRVKAEPAPAADAAE) is disordered. Residues 119–128 (EPAPAADAAE) are compositionally biased toward low complexity.

Belongs to the bacterial ribosomal protein bL21 family. As to quaternary structure, part of the 50S ribosomal subunit. Contacts protein L20.

This protein binds to 23S rRNA in the presence of protein L20. This is Large ribosomal subunit protein bL21 from Rhodopseudomonas palustris (strain BisB5).